Consider the following 420-residue polypeptide: UDP-N-acetylglucosamine 1-carboxyvinyltransferase (420 aa).

K22 to N23 serves as a coordination point for phosphoenolpyruvate. R92 provides a ligand contact to UDP-N-acetyl-alpha-D-glucosamine. The active-site Proton donor is C116. C116 is modified (2-(S-cysteinyl)pyruvic acid O-phosphothioketal). UDP-N-acetyl-alpha-D-glucosamine-binding positions include R121–L125, K161–V164, D306, and I328.

The protein belongs to the EPSP synthase family. MurA subfamily.

The protein resides in the cytoplasm. It catalyses the reaction phosphoenolpyruvate + UDP-N-acetyl-alpha-D-glucosamine = UDP-N-acetyl-3-O-(1-carboxyvinyl)-alpha-D-glucosamine + phosphate. It functions in the pathway cell wall biogenesis; peptidoglycan biosynthesis. Cell wall formation. Adds enolpyruvyl to UDP-N-acetylglucosamine. This is UDP-N-acetylglucosamine 1-carboxyvinyltransferase from Yersinia pseudotuberculosis serotype O:1b (strain IP 31758).